The primary structure comprises 450 residues: Serine/threonine-protein kinase SSN3 (450 aa).

The region spanning 40-393 (YRIIGFISSG…AAQALQSPFF (354 aa)) is the Protein kinase domain. ATP-binding positions include 46–54 (ISSGTYGRV) and Lys-71. Asp-173 serves as the catalytic Proton acceptor. 2 disordered regions span residues 307 to 341 (ASSH…NLEK) and 418 to 450 (QDDN…RQKE). The segment covering 310 to 326 (HHNHHSHHHPHHHHGHY) has biased composition (basic residues).

It belongs to the protein kinase superfamily. CMGC Ser/Thr protein kinase family. CDC2/CDKX subfamily. In terms of assembly, component of the SRB8-11 complex, a regulatory module of the Mediator complex. Interacts with SSN8/FCC1. Requires Mg(2+) as cofactor.

The protein resides in the nucleus. The catalysed reaction is L-seryl-[protein] + ATP = O-phospho-L-seryl-[protein] + ADP + H(+). It carries out the reaction L-threonyl-[protein] + ATP = O-phospho-L-threonyl-[protein] + ADP + H(+). The enzyme catalyses [DNA-directed RNA polymerase] + ATP = phospho-[DNA-directed RNA polymerase] + ADP + H(+). Its function is as follows. Component of the SRB8-11 complex. The SRB8-11 complex is a regulatory module of the Mediator complex which is itself involved in regulation of basal and activated RNA polymerase II-dependent transcription. The SRB8-11 complex may be involved in the transcriptional repression of a subset of genes regulated by Mediator. It may inhibit the association of the Mediator complex with RNA polymerase II to form the holoenzyme complex. The SRB8-11 complex phosphorylates the C-terminal domain (CTD) of the largest subunit of RNA polymerase II. Required for normal growth and secondary metabolism. The protein is Serine/threonine-protein kinase SSN3 (SSN3) of Gibberella moniliformis (Maize ear and stalk rot fungus).